A 416-amino-acid chain; its full sequence is MIFKFSQKALVALYLVVGLAEAVPSKSRVVSRASTFDYNGIVRGVNIGGWLVLEPWITPSIFDNAGDAAVDEWTLTATLGQDQAKAVLSQHWSTFITQDDFQQIAQAGMNHVRIPIGYWAVSSLPDEPYVDGQLEYLDNAISWAREAGLKVVIDLHGAPGSQNGFDNSGRKGPIAWQQGDTVSQTVDAFRALAERYLPQSDVVTAIEALNEPNIPGGVSEAGLRDYYNQIADVVRQIDPDTSVFLSDGFLSTESWNGFKTGEDVVMDTHHYEMFDNYLISLDIDGHVKSACDFGKQIEGSDKPVVVGEWSGAVTDCTKHLNGKGVSTRYQGEYANNVKYGDCANTTQGSVADLSDQERTDTRRFIEAQLDAYEGKNGWLFWTWKTEGAPGWDMQDLLANGVFPSPLTDRQFPNQCA.

The signal sequence occupies residues 1-22 (MIFKFSQKALVALYLVVGLAEA). Glutamate 211 functions as the Proton donor in the catalytic mechanism. 2 disulfides stabilise this stretch: cysteine 291–cysteine 415 and cysteine 316–cysteine 342. The active-site Nucleophile is glutamate 308. A glycan (N-linked (GlcNAc...) asparagine) is linked at asparagine 344.

It belongs to the glycosyl hydrolase 5 (cellulase A) family. Monomer. Mn(2+) serves as cofactor.

It is found in the secreted. The catalysed reaction is Successive hydrolysis of beta-D-glucose units from the non-reducing ends of (1-&gt;3)-beta-D-glucans, releasing alpha-glucose.. Its function is as follows. Beta-glucanases participate in the metabolism of beta-glucan, the main structural component of the cell wall. It could also function biosynthetically as a transglycosylase. The protein is Probable glucan 1,3-beta-glucosidase A (exgA) of Aspergillus fumigatus (strain CBS 144.89 / FGSC A1163 / CEA10) (Neosartorya fumigata).